A 498-amino-acid polypeptide reads, in one-letter code: ATP synthase subunit beta, chloroplastic (498 aa).

Residue 172–179 coordinates ATP; that stretch reads GGAGVGKT.

This sequence belongs to the ATPase alpha/beta chains family. F-type ATPases have 2 components, CF(1) - the catalytic core - and CF(0) - the membrane proton channel. CF(1) has five subunits: alpha(3), beta(3), gamma(1), delta(1), epsilon(1). CF(0) has four main subunits: a(1), b(1), b'(1) and c(9-12).

The protein localises to the plastid. It is found in the chloroplast thylakoid membrane. The catalysed reaction is ATP + H2O + 4 H(+)(in) = ADP + phosphate + 5 H(+)(out). Produces ATP from ADP in the presence of a proton gradient across the membrane. The catalytic sites are hosted primarily by the beta subunits. In Oenothera biennis (German evening primrose), this protein is ATP synthase subunit beta, chloroplastic.